Here is a 588-residue protein sequence, read N- to C-terminus: Adenine deaminase (588 aa).

This sequence belongs to the metallo-dependent hydrolases superfamily. Adenine deaminase family. Homodimer. Requires Mn(2+) as cofactor.

The enzyme catalyses adenine + H2O + H(+) = hypoxanthine + NH4(+). The sequence is that of Adenine deaminase from Shigella boydii serotype 4 (strain Sb227).